Reading from the N-terminus, the 541-residue chain is Chaperonin GroEL 2 (541 aa).

Residues 30–33 (TLGP), Lys-51, 87–91 (DGTTT), Gly-415, and Asp-496 contribute to the ATP site.

The protein belongs to the chaperonin (HSP60) family. In terms of assembly, forms a cylinder of 14 subunits composed of two heptameric rings stacked back-to-back. Interacts with the co-chaperonin GroES.

The protein localises to the cytoplasm. The enzyme catalyses ATP + H2O + a folded polypeptide = ADP + phosphate + an unfolded polypeptide.. In terms of biological role, together with its co-chaperonin GroES, plays an essential role in assisting protein folding. The GroEL-GroES system forms a nano-cage that allows encapsulation of the non-native substrate proteins and provides a physical environment optimized to promote and accelerate protein folding. The chain is Chaperonin GroEL 2 from Bradyrhizobium sp. (strain BTAi1 / ATCC BAA-1182).